Reading from the N-terminus, the 299-residue chain is MWFRQLALFRLPPDARPDLAKLEAGMEQHCFAPPSGLEWSSQGFVAPAGHAPDRLLHPLAGGALATLKREDKVLPAAVIRDVLESKVADIEAREARPVGRKEKRELKEQVTDDLLPRAFTKTGRTRALLDVQAGWILVDAAGQKAEALVSALREALPPFPARLPHTQLSPGSAMTGWLAGEVPDGFELDCDCELKSPGDDGATVRCSKQDLTAPEVRQHLDTGKVVTRLGLVWQERIRFVLTEQLELKRLQFLDVLEEQASQAGDDAPALFDATATLMLGELRHLVADLIAALGGETEA.

Belongs to the RdgC family.

It is found in the cytoplasm. It localises to the nucleoid. Its function is as follows. May be involved in recombination. This Laribacter hongkongensis (strain HLHK9) protein is Recombination-associated protein RdgC.